A 113-amino-acid chain; its full sequence is Phosphoribosyl-ATP pyrophosphatase (113 aa).

This sequence belongs to the PRA-PH family.

It is found in the cytoplasm. The enzyme catalyses 1-(5-phospho-beta-D-ribosyl)-ATP + H2O = 1-(5-phospho-beta-D-ribosyl)-5'-AMP + diphosphate + H(+). It functions in the pathway amino-acid biosynthesis; L-histidine biosynthesis; L-histidine from 5-phospho-alpha-D-ribose 1-diphosphate: step 2/9. This Hydrogenovibrio crunogenus (strain DSM 25203 / XCL-2) (Thiomicrospira crunogena) protein is Phosphoribosyl-ATP pyrophosphatase.